The following is a 547-amino-acid chain: Mercuric reductase (547 aa).

One can recognise an HMA domain in the interval Asn4–Gly67. 2 residues coordinate a metal cation: Cys15 and Cys18. Residues Ala97, Gly117, and Thr122 each coordinate FAD. An intrachain disulfide couples Cys123 to Cys128. Residues Lys132, Ala196, Asp388, and Val396 each contribute to the FAD site. Positions 544 and 545 each coordinate Hg(2+).

It belongs to the class-I pyridine nucleotide-disulfide oxidoreductase family. As to quaternary structure, homodimer. The cofactor is FAD.

It catalyses the reaction Hg + NADP(+) + H(+) = Hg(2+) + NADPH. In terms of biological role, resistance to Hg(2+) in bacteria appears to be governed by a specialized system which includes mercuric reductase. MerA protein is responsible for volatilizing mercury as Hg(0). The sequence is that of Mercuric reductase (merA) from Staphylococcus aureus.